We begin with the raw amino-acid sequence, 551 residues long: Putative transport protein CGSHiEE_03135 (551 aa).

Helical transmembrane passes span 4–24 (IAITISLLALVAVIGLWIGHW), 28–48 (GVGLGIGGVLFGGIIVAHFTD), 65–85 (FGLILFVYTIGIQVGPGFFSS), 95–115 (AFAILIIVLGSIAVVLVHKIA), and 157–177 (VSYAMAYPFGICGILLAMWLI). RCK C-terminal domains lie at 191 to 275 (RFNA…IIGY) and 277 to 360 (VDAP…VIGN). 6 helical membrane-spanning segments follow: residues 370–390 (MLPVFIGIGLGVLVGSIPFYI), 402–424 (AGGPLVVVLILARIGTIGKLYWF), 438–458 (IVLFLAVVGLKSGGSFFDTLV), 463–483 (LEWMGYGIFITFVPLIIAGTI), 492–512 (YLTICGLLAGSMTDPPALAFA), and 529–549 (VYPLVMFLRIMSPQLLAVLLW).

This sequence belongs to the AAE transporter (TC 2.A.81) family. YidE subfamily.

Its subcellular location is the cell membrane. The protein is Putative transport protein CGSHiEE_03135 of Haemophilus influenzae (strain PittEE).